The primary structure comprises 129 residues: Translation initiation factor 5A (129 aa).

Lysine 36 is subject to Hypusine.

This sequence belongs to the eIF-5A family.

It localises to the cytoplasm. Functions by promoting the formation of the first peptide bond. The chain is Translation initiation factor 5A (eif5a) from Thermoplasma acidophilum (strain ATCC 25905 / DSM 1728 / JCM 9062 / NBRC 15155 / AMRC-C165).